A 181-amino-acid polypeptide reads, in one-letter code: 6,7-dimethyl-8-ribityllumazine synthase (181 aa).

Residues tyrosine 27, 58 to 60 (ALE), and 87 to 89 (CVI) contribute to the 5-amino-6-(D-ribitylamino)uracil site. 92 to 93 (ET) lines the (2S)-2-hydroxy-3-oxobutyl phosphate pocket. Histidine 95 functions as the Proton donor in the catalytic mechanism. Position 120 (asparagine 120) interacts with 5-amino-6-(D-ribitylamino)uracil. Arginine 134 is a binding site for (2S)-2-hydroxy-3-oxobutyl phosphate.

It belongs to the DMRL synthase family.

It catalyses the reaction (2S)-2-hydroxy-3-oxobutyl phosphate + 5-amino-6-(D-ribitylamino)uracil = 6,7-dimethyl-8-(1-D-ribityl)lumazine + phosphate + 2 H2O + H(+). Its pathway is cofactor biosynthesis; riboflavin biosynthesis; riboflavin from 2-hydroxy-3-oxobutyl phosphate and 5-amino-6-(D-ribitylamino)uracil: step 1/2. Functionally, catalyzes the formation of 6,7-dimethyl-8-ribityllumazine by condensation of 5-amino-6-(D-ribitylamino)uracil with 3,4-dihydroxy-2-butanone 4-phosphate. This is the penultimate step in the biosynthesis of riboflavin. The chain is 6,7-dimethyl-8-ribityllumazine synthase from Methylobacterium nodulans (strain LMG 21967 / CNCM I-2342 / ORS 2060).